The primary structure comprises 314 residues: Olfactory receptor 10T2 (314 aa).

Topologically, residues 1–26 are extracellular; sequence MRGFNKTTVVTQFILVGFSSLGELQL. A glycan (N-linked (GlcNAc...) asparagine) is linked at Asn-5. The helical transmembrane segment at 27-47 threads the bilayer; sequence LLFVIFLLLYLTILVANVTIM. The Cytoplasmic portion of the chain corresponds to 48 to 55; it reads AVIRFSWT. The helical transmembrane segment at 56–76 threads the bilayer; the sequence is LHTPMYGFLFILSFSESCYTF. Topologically, residues 77 to 100 are extracellular; that stretch reads VIIPQLLVHLLSDTKTISFMACAT. A disulfide bridge links Cys-98 with Cys-190. The chain crosses the membrane as a helical span at residues 101–121; it reads QLFFFLGFACTNCLLIAVMGY. The Cytoplasmic segment spans residues 122–140; it reads DRYVAICHPLRYTLIINKR. A helical transmembrane segment spans residues 141–161; that stretch reads LGLELISLSGATGFFIALVAT. Over 162-198 the chain is Extracellular; that stretch reads NLICDMRFCGPNRVNHYFCDMAPVIKLACTDTHVKEL. A helical membrane pass occupies residues 199 to 218; that stretch reads ALFSLSILVIMVPFLLILIS. The Cytoplasmic portion of the chain corresponds to 219 to 237; the sequence is YGFIVNTILKIPSAEGKKA. The helical transmembrane segment at 238-258 threads the bilayer; that stretch reads FVTCASHLTVVFVHYGCASII. Residues 259–271 are Extracellular-facing; sequence YLRPKSKSASDKD. A helical membrane pass occupies residues 272 to 292; sequence QLVAVTYTVVTPLLNPLVYSL. The Cytoplasmic portion of the chain corresponds to 293 to 314; it reads RNKEVKTALKRVLGMPVATKMS.

This sequence belongs to the G-protein coupled receptor 1 family.

The protein resides in the cell membrane. In terms of biological role, odorant receptor. This is Olfactory receptor 10T2 (OR10T2) from Homo sapiens (Human).